A 211-amino-acid chain; its full sequence is Potassium-transporting ATPase KdpC subunit (211 aa).

Residues 13–35 (VVTMVLTGLLYPLAVTGLAQLLF) traverse the membrane as a helical segment.

It belongs to the KdpC family. The system is composed of three essential subunits: KdpA, KdpB and KdpC.

The protein localises to the cell membrane. Functionally, part of the high-affinity ATP-driven potassium transport (or Kdp) system, which catalyzes the hydrolysis of ATP coupled with the electrogenic transport of potassium into the cytoplasm. This subunit acts as a catalytic chaperone that increases the ATP-binding affinity of the ATP-hydrolyzing subunit KdpB by the formation of a transient KdpB/KdpC/ATP ternary complex. The sequence is that of Potassium-transporting ATPase KdpC subunit from Myxococcus xanthus.